Reading from the N-terminus, the 294-residue chain is Acetyl-coenzyme A carboxylase carboxyl transferase subunit beta (294 aa).

In terms of domain architecture, CoA carboxyltransferase N-terminal spans 30–294 (IMTKCPECKK…PETGGESDGE (265 aa)). Cys-34, Cys-37, Cys-53, and Cys-56 together coordinate Zn(2+). The C4-type zinc finger occupies 34-56 (CPECKKIMYTKELQKNLMVCNYC).

The protein belongs to the AccD/PCCB family. In terms of assembly, acetyl-CoA carboxylase is a heterohexamer composed of biotin carboxyl carrier protein (AccB), biotin carboxylase (AccC) and two subunits each of ACCase subunit alpha (AccA) and ACCase subunit beta (AccD). It depends on Zn(2+) as a cofactor.

Its subcellular location is the cytoplasm. It catalyses the reaction N(6)-carboxybiotinyl-L-lysyl-[protein] + acetyl-CoA = N(6)-biotinyl-L-lysyl-[protein] + malonyl-CoA. It functions in the pathway lipid metabolism; malonyl-CoA biosynthesis; malonyl-CoA from acetyl-CoA: step 1/1. Component of the acetyl coenzyme A carboxylase (ACC) complex. Biotin carboxylase (BC) catalyzes the carboxylation of biotin on its carrier protein (BCCP) and then the CO(2) group is transferred by the transcarboxylase to acetyl-CoA to form malonyl-CoA. The protein is Acetyl-coenzyme A carboxylase carboxyl transferase subunit beta of Listeria welshimeri serovar 6b (strain ATCC 35897 / DSM 20650 / CCUG 15529 / CIP 8149 / NCTC 11857 / SLCC 5334 / V8).